Reading from the N-terminus, the 722-residue chain is MSFVVGVGGSGSGSGGDGGGSHHHDGSETDRKKKRYHRHTAQQIQRLESSFKECPHPDEKQRNQLSRELGLAPRQIKFWFQNRRTQLKAQHERADNSALKAENDKIRCENIAIREALKHAICPNCGGPPVSEDPYFDEQKLRIENAHLREELERMSTIASKYMGRPISQLSTLHPMHISPLDLSMTSLTGCGPFGHGPSLDFDLLPGSSMAVGPNNNLQSQPNLAISDMDKPIMTGIALTAMEELLRLLQTNEPLWTRTDGCRDILNLGSYENVFPRSSNRGKNQNFRVEASRSSGIVFMNAMALVDMFMDCVKWTELFPSIIAASKTLAVISSGMGGTHEGALHLLYEEMEVLSPLVATREFCELRYCQQTEQGSWIVVNVSYDLPQFVSHSQSYRFPSGCLIQDMPNGYSKVTWVEHIETEEKELVHELYREIIHRGIAFGADRWVTTLQRMCERFASLSVPASSSRDLGGVILSPEGKRSMMRLAQRMISNYCLSVSRSNNTRSTVVSELNEVGIRVTAHKSPEPNGTVLCAATTFWLPNSPQNVFNFLKDERTRPQWDVLSNGNAVQEVAHISNGSHPGNCISVLRGSNATHSNNMLILQESSTDSSGAFVVYSPVDLAALNIAMSGEDPSYIPLLSSGFTISPDGNGSNSEQGGASTSSGRASASGSLITVGFQIMVSNLPTAKLNMESVETVNNLIGTTVHQIKTALSGPTASTTA.

Over residues 1–19 (MSFVVGVGGSGSGSGGDGG) the composition is skewed to gly residues. A disordered region spans residues 1 to 42 (MSFVVGVGGSGSGSGGDGGGSHHHDGSETDRKKKRYHRHTAQ). Positions 20 to 31 (GSHHHDGSETDR) are enriched in basic and acidic residues. The homeobox DNA-binding region spans 32–91 (KKKRYHRHTAQQIQRLESSFKECPHPDEKQRNQLSRELGLAPRQIKFWFQNRRTQLKAQH). A coiled-coil region spans residues 81–161 (QNRRTQLKAQ…LERMSTIASK (81 aa)). Positions 227–460 (SDMDKPIMTG…LQRMCERFAS (234 aa)) constitute an START domain.

It belongs to the HD-ZIP homeobox family. Class IV subfamily. In terms of assembly, interacts with BBM. Expressed in apical meristems and young epidermal tissue including trichomes and stipules. Expressed in lateral root tips, the L1 layer of apical inflorescence meristems and early flower primordia, carpel and petal epidermis, stigma papillae, ovule primordia, nucellus and embryo.

Its subcellular location is the nucleus. Its function is as follows. Transcription factor which acts as a positive regulator of drought stress tolerance. Can transactivate CIPK3, NCED3 and ERECTA. Transactivates several cell-wall-loosening protein genes by directly binding to HD motifs in their promoters. These target genes play important roles in coordinating cell-wall extensibility with root development and growth. Transactivates CYP74A/AOS, AOC3, OPR3 and 4CLL5/OPCL1 genes by directly binding to HD motifs in their promoters. These target genes are involved in jasmonate (JA) biosynthesis, and JA signaling affects root architecture by activating auxin signaling, which promotes lateral root formation. Acts as a negative regulator of trichome branching. Required for the establishment of giant cell identity on the abaxial side of sepals. Seems to promote cell differentiation. May regulate cell differentiation and proliferation during root and shoot meristem development. This is Homeobox-leucine zipper protein HDG11 from Arabidopsis thaliana (Mouse-ear cress).